Reading from the N-terminus, the 257-residue chain is MDRIIEKLDHGWWVVSHEQKLWLPKGELPYGEAANFDLVGQRALQIGEWQGEPVWLVQLQRRHDMGSVRQVIDLDVGLFQLAGRGVQLAEFYRSHKYCGYCGHEMYPSKTEWAMLCSHCRERYYPQIAPCIIVAIRRDDSILLAQHTRHRNGVHTVLAGFVEVGETLEQAVAREVMEESGIKVKNLRYVTSQPWPFPQSLMTAFMAEYDSGEIVIDPKELLEANWYRYDDLPLLPPPGTVARRLIEDTVAMCRAEYE.

Substrate is bound by residues Lys-25 and Arg-69. 2 residues coordinate Zn(2+): Cys-98 and Cys-101. Position 111 (Glu-111) interacts with substrate. Cys-116 and Cys-119 together coordinate Zn(2+). Tyr-124 contacts substrate. Positions 125 to 248 (PQIAPCIIVA…TVARRLIEDT (124 aa)) constitute a Nudix hydrolase domain. The a divalent metal cation site is built by Ala-158, Glu-174, and Glu-178. The Nudix box signature appears at 159–180 (GFVEVGETLEQAVAREVMEESG). 192 to 199 (QPWPFPQS) provides a ligand contact to substrate. Glu-219 is a binding site for a divalent metal cation. Position 241 (Ala-241) interacts with substrate.

It belongs to the Nudix hydrolase family. NudC subfamily. As to quaternary structure, homodimer. Mg(2+) serves as cofactor. Requires Mn(2+) as cofactor. Zn(2+) is required as a cofactor.

The enzyme catalyses a 5'-end NAD(+)-phospho-ribonucleoside in mRNA + H2O = a 5'-end phospho-adenosine-phospho-ribonucleoside in mRNA + beta-nicotinamide D-ribonucleotide + 2 H(+). The catalysed reaction is NAD(+) + H2O = beta-nicotinamide D-ribonucleotide + AMP + 2 H(+). It carries out the reaction NADH + H2O = reduced beta-nicotinamide D-ribonucleotide + AMP + 2 H(+). Functionally, mRNA decapping enzyme that specifically removes the nicotinamide adenine dinucleotide (NAD) cap from a subset of mRNAs by hydrolyzing the diphosphate linkage to produce nicotinamide mononucleotide (NMN) and 5' monophosphate mRNA. The NAD-cap is present at the 5'-end of some mRNAs and stabilizes RNA against 5'-processing. Has preference for mRNAs with a 5'-end purine. Catalyzes the hydrolysis of a broad range of dinucleotide pyrophosphates. This is NAD-capped RNA hydrolase NudC from Escherichia coli O127:H6 (strain E2348/69 / EPEC).